The sequence spans 103 residues: Large ribosomal subunit protein eL42 (103 aa).

The disordered stretch occupies residues 37 to 56; that stretch reads GKRRYDRKQSGFGGQTKPVF.

Belongs to the eukaryotic ribosomal protein eL42 family.

This is Large ribosomal subunit protein eL42 (rpl36a) from Dictyostelium discoideum (Social amoeba).